The following is a 317-amino-acid chain: UAP56-interacting factor (317 aa).

An N-acetylmethionine modification is found at Met1. The interval 1–26 (MNRFGTRLVGATATPPPPPKARSNEN) is disordered. At Thr14 the chain carries Phosphothreonine. Ser23 is subject to Phosphoserine. The short motif at 26 to 44 (NLDKIDMSLDDIIKLNRKE) is the UAP56-binding motif element. 2 positions are modified to phosphoserine: Ser60 and Ser117. Lys139 participates in a covalent cross-link: Glycyl lysine isopeptide (Lys-Gly) (interchain with G-Cter in SUMO1). A Glycyl lysine isopeptide (Lys-Gly) (interchain with G-Cter in SUMO2) cross-link involves residue Lys260.

The protein belongs to the UIF family. As to quaternary structure, interacts with DDX39B/UAP56 and NXF1; interaction with DDX39B/UAP56 and NXF1 are mutually exclusive. Interacts with SSRP1; required for its recruitment to mRNAs. Interacts with CHTOP.

It localises to the nucleus. It is found in the nucleoplasm. Its subcellular location is the nucleus speckle. Its function is as follows. Required for mRNA export from the nucleus to the cytoplasm. Acts as an adapter that uses the DDX39B/UAP56-NFX1 pathway to ensure efficient mRNA export and delivering to the nuclear pore. Associates with spliced and unspliced mRNAs simultaneously with ALYREF/THOC4. This chain is UAP56-interacting factor (Fyttd1), found in Mus musculus (Mouse).